We begin with the raw amino-acid sequence, 177 residues long: Large ribosomal subunit protein uL6 (177 aa).

Belongs to the universal ribosomal protein uL6 family. In terms of assembly, part of the 50S ribosomal subunit.

This protein binds to the 23S rRNA, and is important in its secondary structure. It is located near the subunit interface in the base of the L7/L12 stalk, and near the tRNA binding site of the peptidyltransferase center. In Magnetococcus marinus (strain ATCC BAA-1437 / JCM 17883 / MC-1), this protein is Large ribosomal subunit protein uL6.